A 4007-amino-acid polypeptide reads, in one-letter code: PKS-NRPS hybrid synthetase psoA (4007 aa).

Residues 8–444 (KEPIAIIGTG…GTNCHAIVES (437 aa)) form the Ketosynthase family 3 (KS3) domain. Residues cysteine 182, histidine 321, and histidine 364 each act as for beta-ketoacyl synthase activity in the active site. A malonyl-CoA:ACP transacylase (MAT) domain region spans residues 575–897 (VFTGQGAQWA…VLDRKADDIL (323 aa)). The interval 969-1105 (HPLLGSRTPD…GHIRITLAAE (137 aa)) is N-terminal hotdog fold. Residues 969–1147 (HPLLGSRTPD…LSYSGPFRAM (179 aa)) are dehydratase (DH) domain. Residues 969–1276 (HPLLGSRTPD…MSSFLPASEK (308 aa)) form the PKS/mFAS DH domain. Histidine 1001 functions as the Proton acceptor; for dehydratase activity in the catalytic mechanism. The segment at 1120-1276 (DLLPTSVDRF…MSSFLPASEK (157 aa)) is C-terminal hotdog fold. The active-site Proton donor; for dehydratase activity is aspartate 1179. Residues 2131–2305 (TYLLVGLTGH…PASVIDIGMV (175 aa)) are ketoreductase (KR) domain. A Carrier 1 domain is found at 2418–2495 (EARKVMENAL…QICDEVVASL (78 aa)). Serine 2455 bears the O-(pantetheine 4'-phosphoryl)serine mark. Residues 2513–2550 (PAHKLRPWDKPSADTKRTDSIAPVPRSQIAANGPNGLP) are disordered. Residues 2518 to 2531 (RPWDKPSADTKRTD) are compositionally biased toward basic and acidic residues. A condensation (C) domain region spans residues 2589–2885 (QPLSLGQSRL…LETIPLWFKV (297 aa)). The interval 3076–3478 (TYVQLAERAN…LGDVARALVQ (403 aa)) is adenylation (A) domain. One can recognise a Carrier 2 domain in the interval 3576–3652 (TPTEARLRDV…LLAARLDGTS (77 aa)). Residue serine 3612 is modified to O-(pantetheine 4'-phosphoryl)serine. The tract at residues 3696-3920 (LTGATGFLGG…INVETVSNNI (225 aa)) is reductase (R) domain.

The protein in the C-terminal section; belongs to the NRP synthetase family.

It participates in secondary metabolite biosynthesis. Functionally, PKS-NRPS hybrid synthetase; part of the gene cluster that mediates the biosynthesis of pseurotin A, a competitive inhibitor of chitin synthase and an inducer of nerve-cell proliferation. The PKS-NRPS hybrid synthetase psoA is responsible for the biosynthesis of azaspirene, one of the first intermediates having the 1-oxa-7-azaspiro[4,4]-non-2-ene-4,6-dione core of pseurotin, via condensation of one acetyl-CoA, 4 malonyl-CoA, and a L-phenylalanine molecule. The dual-functional monooxygenase/methyltransferase psoF seems to be involved in the addition of the C3 methyl group onto the pseurotin scaffold. Azaspirene is then converted to synerazol through 4 steps including oxidation of C17 by the cytochrome P450 monooxygenase psoD, O-methylation of the hydroxy group of C8 by the methyltransferase psoC, and the trans-to-cis isomerization of the C13 olefin by the glutathione S-transferase psoE. The fourth step of synerazol production is performed by the dual-functional monooxygenase/methyltransferase psoF which seems to catalyze the epoxidation of the intermediate deepoxy-synerazol. Synerazol can be attacked by a water molecule nonenzymatically at two different positions to yield two diol products, pseurotin A and pseurotin D. The polypeptide is PKS-NRPS hybrid synthetase psoA (Aspergillus fumigatus (strain ATCC MYA-4609 / CBS 101355 / FGSC A1100 / Af293) (Neosartorya fumigata)).